A 338-amino-acid polypeptide reads, in one-letter code: DNA-directed RNA polymerase subunit alpha (338 aa).

Residues 1-226 (MLIAQRPSLT…ELFGLARELN (226 aa)) form an alpha N-terminal domain (alpha-NTD) region. An alpha C-terminal domain (alpha-CTD) region spans residues 243–338 (LAADLVMPIE…DAGFLETEHY (96 aa)).

It belongs to the RNA polymerase alpha chain family. In terms of assembly, homodimer. The RNAP catalytic core consists of 2 alpha, 1 beta, 1 beta' and 1 omega subunit. When a sigma factor is associated with the core the holoenzyme is formed, which can initiate transcription.

The enzyme catalyses RNA(n) + a ribonucleoside 5'-triphosphate = RNA(n+1) + diphosphate. In terms of biological role, DNA-dependent RNA polymerase catalyzes the transcription of DNA into RNA using the four ribonucleoside triphosphates as substrates. This Streptomyces avermitilis (strain ATCC 31267 / DSM 46492 / JCM 5070 / NBRC 14893 / NCIMB 12804 / NRRL 8165 / MA-4680) protein is DNA-directed RNA polymerase subunit alpha.